A 505-amino-acid chain; its full sequence is MADYVLAIDQGTTSSRAIIFDHSGTIVATGQKEHEQIFPRAGWVEHDPEEIWTNVRDVVGQALGRASVRASNIAAIGITNQRETAVVWDRTTGKPVYNAIVWQDTRTQRIVEELGGSEGAEKYKARVGLPLATYFSGPKIKWILDNVDGAREAAERGDLLFGNTDTWVLWNMTGGVNGGVHVTDVTNASRTMLMDLDTLSWNPDIAADMGIPVSMLPEIRSSSEVYGKDREEGLLAGVPIAGILGDQQAATFGQACFEIGMAKNTYGTGNFMLMNTGTEQVASENGLLTTVCYKIGDQPQVYALEGSIAVTGSLVQWLRDNLKVISTAPEIENLALTVEDNGGAYFVPAFSGLFAPYWRADARGALVGLTRYVSLGHIARAALEATAFQSAEVLDAMKADSGVDLTELKVDGGMVANEVLMQFQADILGVDVVRPKVAETTALGAAYAAGIAVGFWNGEQDVIDNWAEDKRWTPQMDRGDRDRLYRNWKKAVTKTFDWVDDDVEN.

T12 contributes to the ADP binding site. ATP is bound by residues T12, T13, and S14. Sn-glycerol 3-phosphate is bound at residue T12. Position 16 (R16) interacts with ADP. Residues R82, E83, Y134, and D246 each contribute to the sn-glycerol 3-phosphate site. Positions 82, 83, 134, 246, and 247 each coordinate glycerol. T268 and G312 together coordinate ADP. Positions 268, 312, 316, and 413 each coordinate ATP. Residues G413 and N417 each contribute to the ADP site.

Belongs to the FGGY kinase family.

It carries out the reaction glycerol + ATP = sn-glycerol 3-phosphate + ADP + H(+). It participates in polyol metabolism; glycerol degradation via glycerol kinase pathway; sn-glycerol 3-phosphate from glycerol: step 1/1. Its activity is regulated as follows. Inhibited by fructose 1,6-bisphosphate (FBP). In terms of biological role, key enzyme in the regulation of glycerol uptake and metabolism. Catalyzes the phosphorylation of glycerol to yield sn-glycerol 3-phosphate. This Beutenbergia cavernae (strain ATCC BAA-8 / DSM 12333 / CCUG 43141 / JCM 11478 / NBRC 16432 / NCIMB 13614 / HKI 0122) protein is Glycerol kinase.